A 226-amino-acid polypeptide reads, in one-letter code: MYAFLTGPMLWASLLVFFGGLLARVIWYIRGLDWRLDRVAYKPHLAIGLQGAVQSALKWLVPFGTYSWRQQPFFTVAFFLFHIGAVLVPLFLAGHNVILEERFGFSLPALPMGVADTLTVLAIIGLVMIALRRIALTEVRILTTGYDWFILAVSAAPFVTGFLARLHVGDYDTWLLAHIITGELFLIVAPFTKLSHIVLFFMSRGQLGMDYAIKRGGATRGPAFPW.

A run of 6 helical transmembrane segments spans residues M1 to A23, A46 to L57, F73 to L99, M112 to L131, I141 to A164, and L194 to P222.

It depends on heme b as a cofactor.

It is found in the cell membrane. In terms of biological role, HMWC (high-molecular-weight cytochrome c), ORF2, ORF3, ORF4, ORF5 and ORF6 in the HMC operon form a transmembrane protein complex that allows electron flow from the periplasmic hydrogenase to the cytoplasmic enzymes that catalyze reduction of sulfates. This is Protein DVU_0532 from Nitratidesulfovibrio vulgaris (strain ATCC 29579 / DSM 644 / CCUG 34227 / NCIMB 8303 / VKM B-1760 / Hildenborough) (Desulfovibrio vulgaris).